Reading from the N-terminus, the 529-residue chain is Peptide chain release factor 3 (529 aa).

The tr-type G domain maps to 11 to 280 (NKRRTFAIIS…GLVKWAPAPM (270 aa)). GTP is bound by residues 20-27 (SHPDAGKT), 88-92 (DTPGH), and 142-145 (NKLD).

This sequence belongs to the TRAFAC class translation factor GTPase superfamily. Classic translation factor GTPase family. PrfC subfamily.

Its subcellular location is the cytoplasm. In terms of biological role, increases the formation of ribosomal termination complexes and stimulates activities of RF-1 and RF-2. It binds guanine nucleotides and has strong preference for UGA stop codons. It may interact directly with the ribosome. The stimulation of RF-1 and RF-2 is significantly reduced by GTP and GDP, but not by GMP. The chain is Peptide chain release factor 3 from Proteus mirabilis (strain HI4320).